The following is a 501-amino-acid chain: Cytochrome P450 2J1 (501 aa).

Cysteine 447 is a heme binding site.

The protein belongs to the cytochrome P450 family. Heme serves as cofactor. Small intestine.

Its subcellular location is the endoplasmic reticulum membrane. The protein localises to the microsome membrane. It catalyses the reaction an organic molecule + reduced [NADPH--hemoprotein reductase] + O2 = an alcohol + oxidized [NADPH--hemoprotein reductase] + H2O + H(+). Its function is as follows. Catalyzes the N-demethylation of benzphetamine to formaldehyde. In Oryctolagus cuniculus (Rabbit), this protein is Cytochrome P450 2J1 (CYP2J1).